The primary structure comprises 167 residues: Ureidoglycolate lyase (167 aa).

It belongs to the ureidoglycolate lyase family. In terms of assembly, homodimer. Requires Ni(2+) as cofactor.

The catalysed reaction is (S)-ureidoglycolate = urea + glyoxylate. It participates in nitrogen metabolism; (S)-allantoin degradation. Catalyzes the catabolism of the allantoin degradation intermediate (S)-ureidoglycolate, generating urea and glyoxylate. Involved in the utilization of allantoin as nitrogen source. The sequence is that of Ureidoglycolate lyase from Pseudomonas entomophila (strain L48).